The primary structure comprises 115 residues: NADH-ubiquinone oxidoreductase chain 3 (115 aa).

The next 3 helical transmembrane spans lie at 5–25, 55–75, and 86–106; these read LTFM…FWLP, FFLV…LLPL, and LMLT…AYEW.

It belongs to the complex I subunit 3 family. As to quaternary structure, core subunit of respiratory chain NADH dehydrogenase (Complex I) which is composed of 45 different subunits. Interacts with TMEM186. Interacts with TMEM242.

It is found in the mitochondrion inner membrane. It catalyses the reaction a ubiquinone + NADH + 5 H(+)(in) = a ubiquinol + NAD(+) + 4 H(+)(out). Core subunit of the mitochondrial membrane respiratory chain NADH dehydrogenase (Complex I) which catalyzes electron transfer from NADH through the respiratory chain, using ubiquinone as an electron acceptor. Essential for the catalytic activity of complex I. The protein is NADH-ubiquinone oxidoreductase chain 3 of Avahi unicolor (Sambirano woolly lemur).